The sequence spans 200 residues: NADH-quinone oxidoreductase subunit B 2 (200 aa).

4 residues coordinate [4Fe-4S] cluster: C79, C80, C144, and C174.

The protein belongs to the complex I 20 kDa subunit family. In terms of assembly, NDH-1 is composed of 14 different subunits. Subunits NuoB, C, D, E, F, and G constitute the peripheral sector of the complex. It depends on [4Fe-4S] cluster as a cofactor.

The protein resides in the cell inner membrane. It catalyses the reaction a quinone + NADH + 5 H(+)(in) = a quinol + NAD(+) + 4 H(+)(out). In terms of biological role, NDH-1 shuttles electrons from NADH, via FMN and iron-sulfur (Fe-S) centers, to quinones in the respiratory chain. The immediate electron acceptor for the enzyme in this species is believed to be ubiquinone. Couples the redox reaction to proton translocation (for every two electrons transferred, four hydrogen ions are translocated across the cytoplasmic membrane), and thus conserves the redox energy in a proton gradient. The protein is NADH-quinone oxidoreductase subunit B 2 of Rhodopseudomonas palustris (strain BisA53).